Reading from the N-terminus, the 428-residue chain is Serine--tRNA ligase (428 aa).

An L-serine-binding site is contributed by 231–233 (TAE). An ATP-binding site is contributed by 262 to 264 (RSE). Residue E285 participates in L-serine binding. 349–352 (EISS) is an ATP binding site. S385 is an L-serine binding site.

Belongs to the class-II aminoacyl-tRNA synthetase family. Type-1 seryl-tRNA synthetase subfamily. As to quaternary structure, homodimer. The tRNA molecule binds across the dimer.

Its subcellular location is the cytoplasm. The enzyme catalyses tRNA(Ser) + L-serine + ATP = L-seryl-tRNA(Ser) + AMP + diphosphate + H(+). It carries out the reaction tRNA(Sec) + L-serine + ATP = L-seryl-tRNA(Sec) + AMP + diphosphate + H(+). Its pathway is aminoacyl-tRNA biosynthesis; selenocysteinyl-tRNA(Sec) biosynthesis; L-seryl-tRNA(Sec) from L-serine and tRNA(Sec): step 1/1. Functionally, catalyzes the attachment of serine to tRNA(Ser). Is also able to aminoacylate tRNA(Sec) with serine, to form the misacylated tRNA L-seryl-tRNA(Sec), which will be further converted into selenocysteinyl-tRNA(Sec). The protein is Serine--tRNA ligase of Cellvibrio japonicus (strain Ueda107) (Pseudomonas fluorescens subsp. cellulosa).